The following is a 332-amino-acid chain: tRNA dimethylallyltransferase (332 aa).

Residue 17–24 (GPTCSGKS) participates in ATP binding. 19–24 (TCSGKS) is a binding site for substrate. Interaction with substrate tRNA stretches follow at residues 42–45 (DSMQ) and 166–170 (QRISR).

The protein belongs to the IPP transferase family. Monomer. The cofactor is Mg(2+).

It carries out the reaction adenosine(37) in tRNA + dimethylallyl diphosphate = N(6)-dimethylallyladenosine(37) in tRNA + diphosphate. Functionally, catalyzes the transfer of a dimethylallyl group onto the adenine at position 37 in tRNAs that read codons beginning with uridine, leading to the formation of N6-(dimethylallyl)adenosine (i(6)A). The polypeptide is tRNA dimethylallyltransferase (Gluconobacter oxydans (strain 621H) (Gluconobacter suboxydans)).